A 381-amino-acid chain; its full sequence is uncharacterized protein (381 aa).

The tract at residues 176–292 is disordered; that stretch reads HAAGKIKKSK…EPMVDETPQN (117 aa). The span at 177-186 shows a compositional bias: basic residues; the sequence is AAGKIKKSKN. A compositionally biased stretch (basic and acidic residues) spans 187 to 212; sequence QKKDGTLSRPLGKKENKSVVKVKIEE. Over residues 276-286 the composition is skewed to acidic residues; that stretch reads DEEDEDEEPMV.

This is an uncharacterized protein from Caenorhabditis elegans.